The following is a 309-amino-acid chain: Xylose/arabinose import permease protein XacI (309 aa).

The next 6 membrane-spanning stretches (helical) occupy residues 29–49 (LVVF…MTAI), 89–109 (LIMS…AAYG), 121–141 (MLML…VPLA), 170–190 (ELVP…TILF), 227–247 (MFGV…LFAF), and 282–302 (AAFL…EQFA). Residues 85–297 (FFNSLIMSIP…VPTLILYVAF (213 aa)) form the ABC transmembrane type-1 domain.

The protein belongs to the binding-protein-dependent transport system permease family. As to quaternary structure, the complex is composed of two ATP-binding proteins (XacJ and XacK), two transmembrane proteins (XacH and XacI) and a solute-binding protein (XacG).

It localises to the cell membrane. Functionally, part of the ABC transporter complex XacGHIJK involved in the uptake of xylose and arabinose. Responsible for the translocation of the substrate across the membrane. The polypeptide is Xylose/arabinose import permease protein XacI (Haloferax volcanii (strain ATCC 29605 / DSM 3757 / JCM 8879 / NBRC 14742 / NCIMB 2012 / VKM B-1768 / DS2) (Halobacterium volcanii)).